Consider the following 143-residue polypeptide: Large ribosomal subunit protein eL28z (143 aa).

Belongs to the eukaryotic ribosomal protein eL28 family. As to quaternary structure, component of the large ribosomal subunit. As to expression, expressed in seedlings, roots, stems, leaves, inflorescences and siliques.

The protein resides in the cytoplasm. Its subcellular location is the nucleus. It localises to the nucleolus. The protein localises to the nucleoplasm. Component of the large ribosomal subunit. Essential in leaf polarity establishment, probably having a role for translation in leaf dorsoventral patterning to specify leaf adaxial identity. The chain is Large ribosomal subunit protein eL28z from Arabidopsis thaliana (Mouse-ear cress).